The sequence spans 708 residues: Fatty acid oxidation complex subunit alpha (708 aa).

Residues 1–190 (MDMEKTFNLT…KMGLVDDAVP (190 aa)) form an enoyl-CoA hydratase region. The 3-hydroxyacyl-CoA dehydrogenase stretch occupies residues 310–708 (QKVNKVMVLG…MAEEGTRFFS (399 aa)).

In the N-terminal section; belongs to the enoyl-CoA hydratase/isomerase family. The protein in the central section; belongs to the 3-hydroxyacyl-CoA dehydrogenase family. Heterotetramer of two alpha chains (FadJ) and two beta chains (FadI).

Its subcellular location is the cytoplasm. The enzyme catalyses a (3S)-3-hydroxyacyl-CoA = a (2E)-enoyl-CoA + H2O. It carries out the reaction a 4-saturated-(3S)-3-hydroxyacyl-CoA = a (3E)-enoyl-CoA + H2O. The catalysed reaction is a (3S)-3-hydroxyacyl-CoA + NAD(+) = a 3-oxoacyl-CoA + NADH + H(+). It catalyses the reaction (3S)-3-hydroxybutanoyl-CoA = (3R)-3-hydroxybutanoyl-CoA. The protein operates within lipid metabolism; fatty acid beta-oxidation. Its function is as follows. Catalyzes the formation of a hydroxyacyl-CoA by addition of water on enoyl-CoA. Also exhibits 3-hydroxyacyl-CoA epimerase and 3-hydroxyacyl-CoA dehydrogenase activities. This chain is Fatty acid oxidation complex subunit alpha, found in Shewanella halifaxensis (strain HAW-EB4).